The following is a 296-amino-acid chain: Glycine--tRNA ligase alpha subunit (296 aa).

This sequence belongs to the class-II aminoacyl-tRNA synthetase family. Tetramer of two alpha and two beta subunits.

It is found in the cytoplasm. The catalysed reaction is tRNA(Gly) + glycine + ATP = glycyl-tRNA(Gly) + AMP + diphosphate. The sequence is that of Glycine--tRNA ligase alpha subunit from Francisella philomiragia subsp. philomiragia (strain ATCC 25017 / CCUG 19701 / FSC 153 / O#319-036).